A 208-amino-acid polypeptide reads, in one-letter code: Probable molybdenum cofactor guanylyltransferase (208 aa).

GTP-binding positions include isoleucine 12 to glycine 14, lysine 24, aspartate 72, and aspartate 101. Aspartate 101 contributes to the Mg(2+) binding site.

This sequence belongs to the MobA family. Mg(2+) is required as a cofactor.

Its subcellular location is the cytoplasm. The enzyme catalyses Mo-molybdopterin + GTP + H(+) = Mo-molybdopterin guanine dinucleotide + diphosphate. Its function is as follows. Transfers a GMP moiety from GTP to Mo-molybdopterin (Mo-MPT) cofactor (Moco or molybdenum cofactor) to form Mo-molybdopterin guanine dinucleotide (Mo-MGD) cofactor. The chain is Probable molybdenum cofactor guanylyltransferase from Chloroflexus aggregans (strain MD-66 / DSM 9485).